Reading from the N-terminus, the 224-residue chain is Response regulator protein GraR (224 aa).

One can recognise a Response regulatory domain in the interval 2-115 (DILLVEDDMT…VLIAKLQAIY (114 aa)). Asp51 carries the 4-aspartylphosphate modification. The segment at residues 126–224 (KRVLSWQDAI…KIGKGYMAHG (99 aa)) is a DNA-binding region (ompR/PhoB-type).

Post-translationally, phosphorylated by GraS.

The protein localises to the cytoplasm. In terms of biological role, member of the two-component regulatory system GraR/GraS involved in resistance against cationic antimicrobial peptides (CAMPs). This is Response regulator protein GraR (graR) from Staphylococcus saprophyticus subsp. saprophyticus (strain ATCC 15305 / DSM 20229 / NCIMB 8711 / NCTC 7292 / S-41).